A 141-amino-acid polypeptide reads, in one-letter code: Protein E6 (141 aa).

Zinc fingers lie at residues 27–64 (CRFC…CSSC) and 101–137 (CKFC…CRHC).

It belongs to the papillomaviridae E6 protein family. As to quaternary structure, forms homodimers. Interacts with ubiquitin-protein ligase UBE3A/E6-AP; this interaction stimulates UBE3A ubiquitin activity. Interacts with host BAK1.

It localises to the host cytoplasm. It is found in the host nucleus. Plays a major role in the induction and maintenance of cellular transformation. E6 associates with host UBE3A/E6-AP ubiquitin-protein ligase and modulates its activity. Protects host keratinocytes from apoptosis by mediating the degradation of host BAK1. May also inhibit host immune response. This chain is Protein E6, found in Human papillomavirus 15.